We begin with the raw amino-acid sequence, 1378 residues long: DNA-directed RNA polymerase subunit beta' (1378 aa).

Zn(2+) contacts are provided by Cys69, Cys71, Cys84, and Cys87. Asp460, Asp462, and Asp464 together coordinate Mg(2+). Cys808, Cys882, Cys889, and Cys892 together coordinate Zn(2+).

This sequence belongs to the RNA polymerase beta' chain family. As to quaternary structure, the RNAP catalytic core consists of 2 alpha, 1 beta, 1 beta' and 1 omega subunit. When a sigma factor is associated with the core the holoenzyme is formed, which can initiate transcription. It depends on Mg(2+) as a cofactor. Requires Zn(2+) as cofactor.

The catalysed reaction is RNA(n) + a ribonucleoside 5'-triphosphate = RNA(n+1) + diphosphate. Functionally, DNA-dependent RNA polymerase catalyzes the transcription of DNA into RNA using the four ribonucleoside triphosphates as substrates. The chain is DNA-directed RNA polymerase subunit beta' from Rickettsia canadensis (strain McKiel).